Consider the following 397-residue polypeptide: ORC1-type DNA replication protein 1 (397 aa).

ATP-binding positions include 67-71 (TGKTA), Y208, and R220.

This sequence belongs to the CDC6/cdc18 family.

In terms of biological role, involved in regulation of DNA replication. In Sulfolobus acidocaldarius (strain ATCC 33909 / DSM 639 / JCM 8929 / NBRC 15157 / NCIMB 11770), this protein is ORC1-type DNA replication protein 1 (cdc6-1).